Consider the following 931-residue polypeptide: Elicitor of plant defense protein 1 (931 aa).

The tract at residues N13 to P32 is disordered. Positions P19–L277 constitute a uDENN domain. In terms of domain architecture, cDENN spans E301 to Q433. A dDENN domain is found at A435–A799. Disordered regions lie at residues L478–D552 and S566–P586. Positions T521 to S537 are enriched in polar residues. Residues S566–R575 are compositionally biased toward basic and acidic residues. A Phorbol-ester/DAG-type zinc finger spans residues G666–C714.

This sequence belongs to the EPD1 elicitor family.

The protein resides in the secreted. The protein localises to the host cell. Acts as an elicitor that triggers cell death and defense responses in the host plants. The sequence is that of Elicitor of plant defense protein 1 from Fusarium odoratissimum (strain NRRL 54006).